The following is a 295-amino-acid chain: (R)-phenoxypropionate/alpha-ketoglutarate-dioxygenase (295 aa).

Residues His-111 and Asp-113 each coordinate Fe cation. Residues Thr-138 and Trp-255 each contribute to the 2-oxoglutarate site. His-270 contributes to the Fe cation binding site. A 2-oxoglutarate-binding site is contributed by Arg-281.

This sequence belongs to the TfdA dioxygenase family. As to quaternary structure, homotrimer. Fe cation serves as cofactor. Requires L-ascorbate as cofactor.

It catalyses the reaction (R)-2-(4-chloro-2-methylphenoxy)propanoate + 2-oxoglutarate + O2 = 2-methyl-4-chlorophenol + pyruvate + succinate + CO2. The catalysed reaction is (R)-(2,4-dichlorophenoxy)propanoate + 2-oxoglutarate + O2 = 2,4-dichlorophenol + pyruvate + succinate + CO2. It functions in the pathway xenobiotic degradation; 2-(2,4-dichlorophenoxy)propanoate degradation. Inhibited by divalent cations, most significantly by copper and nickel, and by diethylpyrocarbonate (DEPC). Functionally, involved in the degradation of the phenoxypropionate herbicides. Catalyzes the enantiospecific cleavage of the ether bond in the herbicid R-dichlorprop ((R)-2-(2,4-dichlorophenoxy)propionate)(R-2,4-DP) and R-mecoprop ((R)-2-(4-chloro-2-methylphenoxy)propionate)(R-2,4-MCPP). It can also accept (RS)-2-(2,4,5-trichlorophenoxy)propionate, (RS)-2-(4-chlorophenoxy)propionate, (RS)-2-(m-chlorophenoxy)propionate, however it can only accept 2-oxoglutarate as oxygen acceptor. The protein is (R)-phenoxypropionate/alpha-ketoglutarate-dioxygenase of Delftia acidovorans (Pseudomonas acidovorans).